The following is a 282-amino-acid chain: MQIFTTPQQLAAQCRAWHAAGDDIALVPTMGYYHAGHEDLMAHGRTLAKRLVVSLFVNPAQFGPGEDLAAYPRDAERDTAIAASHGADAIFMPEPGSMYEADHATWVEVPDLARGLCGQSRPTHFRGVCTVVLKLFMLSAADVAVFGQKDWQQQAIIKRMVRDLNLPVRIETRPTVREADGLALSSRNVYLSPEERAQAPQIRQALLHAQKLAQEGAGSATLLREAVLRRWAELLPLGRLDYLTIVHPESLEPLDEVVGPALMACAVRMGKARLIDNILLHS.

Position 30-37 (30-37 (MGYYHAGH)) interacts with ATP. The Proton donor role is filled by His-37. Position 61 (Gln-61) interacts with (R)-pantoate. Gln-61 contacts beta-alanine. 147–150 (GQKD) contacts ATP. Gln-153 lines the (R)-pantoate pocket. ATP is bound by residues Val-176 and 184-187 (LSSR).

Belongs to the pantothenate synthetase family. In terms of assembly, homodimer.

It localises to the cytoplasm. It carries out the reaction (R)-pantoate + beta-alanine + ATP = (R)-pantothenate + AMP + diphosphate + H(+). It participates in cofactor biosynthesis; (R)-pantothenate biosynthesis; (R)-pantothenate from (R)-pantoate and beta-alanine: step 1/1. Its function is as follows. Catalyzes the condensation of pantoate with beta-alanine in an ATP-dependent reaction via a pantoyl-adenylate intermediate. This Desulfovibrio desulfuricans (strain ATCC 27774 / DSM 6949 / MB) protein is Pantothenate synthetase.